Reading from the N-terminus, the 303-residue chain is MTGHAPLVGVIGGSGLYKLEGIEPVESLNIDTPWGRPSSPITLFKLPSGPVVAFLARHGVSHQFTPSEVPSRANIAALKKIGCQVIIAFSAVGSLREEIKPRDIVVPSQIIDRTKSVRPCTFFEGLGVVGHAMFGEPFDTELTGLVTKSIKEAVTGFEMNDRIGVHAEKVAICMEGPAFSTRAESNMYRMFGGDIINMSVLPEAKLAREAELSYALIAQITDYDAWRESEEPVTVAEVMATIAANVSVSNRLTLTILDEVHNAVAKGQLKTCKGTMEYSVMTKKEMISEESKKTLSFILPYFS.

Residues Ser14, 57–58, and 90–91 contribute to the phosphate site; these read RH and SA. Substrate is bound at residue Met198. Position 199 (Ser199) interacts with phosphate. 222 to 224 contributes to the substrate binding site; the sequence is DYD.

This sequence belongs to the PNP/MTAP phosphorylase family. MTAP subfamily. As to quaternary structure, homotrimer.

The protein localises to the cytoplasm. The protein resides in the nucleus. It catalyses the reaction S-methyl-5'-thioadenosine + phosphate = 5-(methylsulfanyl)-alpha-D-ribose 1-phosphate + adenine. It functions in the pathway amino-acid biosynthesis; L-methionine biosynthesis via salvage pathway; S-methyl-5-thio-alpha-D-ribose 1-phosphate from S-methyl-5'-thioadenosine (phosphorylase route): step 1/1. Catalyzes the reversible phosphorylation of S-methyl-5'-thioadenosine (MTA) to adenine and 5-methylthioribose-1-phosphate. Involved in the breakdown of MTA, a major by-product of polyamine biosynthesis. Responsible for the first step in the methionine salvage pathway after MTA has been generated from S-adenosylmethionine. Has broad substrate specificity with 6-aminopurine nucleosides as preferred substrates. The polypeptide is S-methyl-5'-thioadenosine phosphorylase 1 (Puccinia graminis f. sp. tritici (strain CRL 75-36-700-3 / race SCCL) (Black stem rust fungus)).